A 71-amino-acid chain; its full sequence is SPI-2 type 3 secretion system needle filament protein (71 aa).

Belongs to the SctF family. The core secretion machinery of the T3SS is composed of approximately 20 different proteins, including cytoplasmic components, a base, an export apparatus and a needle. This subunit polymerizes and forms the helical needle filament.

The protein localises to the secreted. It is found in the cell surface. Functionally, component of the type III secretion system (T3SS), also called injectisome, which is used to inject bacterial effector proteins into eukaryotic host cells. SsaG/SctF2 forms the external needle filament that protrudes from the bacterial surface. In terms of biological role, during infection, can induce innate immune responses. The needle proteins interact with host TLR2 or TLR4, and induce signaling by NF-kappa-B and/or AP-1. This activation is MyD88 dependent and results in increased expression of cytokines, including TNF-alpha, IL-6 and IL-8. This Salmonella typhimurium (strain LT2 / SGSC1412 / ATCC 700720) protein is SPI-2 type 3 secretion system needle filament protein.